Consider the following 316-residue polypeptide: M-phase inducer phosphatase cdc-25.3 (316 aa).

The interval 35-65 (QNRQHSSAISHISNSSPPTRKRSIDGGYTSG) is disordered. Residues 39-50 (HSSAISHISNSS) are compositionally biased toward low complexity. In terms of domain architecture, Rhodanese spans 136-242 (FMQKYILIDC…FYAFTRGLEK (107 aa)).

Belongs to the MPI phosphatase family.

The catalysed reaction is O-phospho-L-tyrosyl-[protein] + H2O = L-tyrosyl-[protein] + phosphate. The protein is M-phase inducer phosphatase cdc-25.3 (cdc-25.3) of Caenorhabditis elegans.